A 365-amino-acid chain; its full sequence is MKSVRSFIRDDIQAMSAYQIADVPPGFAKLDSMESPVHPFAGHETLLQEWQARLAAAPIHLYPNPSGSGLQEALRSAFDIPDCADIALGNGSDELIQFITMLTAKPGAAMLAAEPSFVMYRHNAALYGMDYVGVPLNGDFTLNLPAVLEAVRKHRPALTFIAYPNNPTGVCFTRAEIEAVIEASDGIVVVDEAYGAFNGDSFLPQAGSIPNLIVMRTVSKIGFAGLRIGYAAGCPEVIGELQKILPPYNMNQLSLTTAKLALQHYGIISANIDSLKNERERMFAELGKICRLNTFPSQANFITIRVPDADLLFDTLKQNRILVKKLHGAHPLLEHCLRITVGSPAQNDAVLNIIRQLYCQPTDFL.

Lys-220 is modified (N6-(pyridoxal phosphate)lysine).

Belongs to the class-II pyridoxal-phosphate-dependent aminotransferase family. Histidinol-phosphate aminotransferase subfamily. In terms of assembly, homodimer. The cofactor is pyridoxal 5'-phosphate.

It catalyses the reaction L-histidinol phosphate + 2-oxoglutarate = 3-(imidazol-4-yl)-2-oxopropyl phosphate + L-glutamate. Its pathway is amino-acid biosynthesis; L-histidine biosynthesis; L-histidine from 5-phospho-alpha-D-ribose 1-diphosphate: step 7/9. This Neisseria meningitidis serogroup A / serotype 4A (strain DSM 15465 / Z2491) protein is Histidinol-phosphate aminotransferase.